The following is a 444-amino-acid chain: Amino-acid acetyltransferase (444 aa).

Residues 295–434 (EKVRRANIND…QALYNYQRRS (140 aa)) form the N-acetyltransferase domain.

The protein belongs to the acetyltransferase family. ArgA subfamily. In terms of assembly, homohexamer.

It is found in the cytoplasm. The catalysed reaction is L-glutamate + acetyl-CoA = N-acetyl-L-glutamate + CoA + H(+). Its pathway is amino-acid biosynthesis; L-arginine biosynthesis; N(2)-acetyl-L-ornithine from L-glutamate: step 1/4. The chain is Amino-acid acetyltransferase from Proteus mirabilis (strain HI4320).